The primary structure comprises 59 residues: Large ribosomal subunit protein uL30 (59 aa).

The protein belongs to the universal ribosomal protein uL30 family. In terms of assembly, part of the 50S ribosomal subunit.

The chain is Large ribosomal subunit protein uL30 from Staphylococcus aureus (strain JH1).